Consider the following 499-residue polypeptide: NADH-quinone oxidoreductase subunit N (499 aa).

The next 14 membrane-spanning stretches (helical) occupy residues 16-36 (AAFS…LDAF), 42-62 (AIPW…ITHL), 77-97 (GGFV…TILL), 109-129 (YGEV…LGSA), 133-153 (VSIF…TGFI), 167-187 (FLLG…MYGA), 208-228 (LLFW…VSAA), 252-272 (ATKA…VPGG), 274-294 (WQLS…VMAL), 302-322 (LLAY…SAGT), 327-347 (AGAL…FGVM), 376-396 (GSTM…GGFI), 411-433 (TWLV…RVVY), and 463-483 (GTLV…GGVL).

Belongs to the complex I subunit 2 family. In terms of assembly, NDH-1 is composed of 14 different subunits. Subunits NuoA, H, J, K, L, M, N constitute the membrane sector of the complex.

The protein localises to the cell inner membrane. It catalyses the reaction a quinone + NADH + 5 H(+)(in) = a quinol + NAD(+) + 4 H(+)(out). Its function is as follows. NDH-1 shuttles electrons from NADH, via FMN and iron-sulfur (Fe-S) centers, to quinones in the respiratory chain. The immediate electron acceptor for the enzyme in this species is believed to be a menaquinone. Couples the redox reaction to proton translocation (for every two electrons transferred, four hydrogen ions are translocated across the cytoplasmic membrane), and thus conserves the redox energy in a proton gradient. This is NADH-quinone oxidoreductase subunit N from Salinibacter ruber (strain DSM 13855 / M31).